The sequence spans 360 residues: Mannan endo-1,4-beta-mannosidase (360 aa).

Residues 1–24 (MLKKLAVCLSIVLLLLGAASPISA) form the signal peptide. One can recognise a GH26 domain in the interval 36-347 (QTTKDIMNWL…YQNSWTLNKG (312 aa)). Histidine 129 is a binding site for substrate. Catalysis depends on glutamate 191, which acts as the Proton donor. Substrate-binding residues include tryptophan 196 and tyrosine 266. The active-site Nucleophile is glutamate 290.

This sequence belongs to the glycosyl hydrolase 26 family. Homodimer.

It localises to the secreted. It catalyses the reaction Random hydrolysis of (1-&gt;4)-beta-D-mannosidic linkages in mannans, galactomannans and glucomannans.. In terms of biological role, involved in the degradation of glucomannan. Catalyzes the endo hydrolysis of beta-1,4-linked mannan, galactomannan and glucomannan. This is Mannan endo-1,4-beta-mannosidase from Bacillus subtilis.